A 492-amino-acid polypeptide reads, in one-letter code: Gamma-aminobutyric acid receptor subunit alpha-3 (492 aa).

Residues Met1–Gly28 form the signal peptide. Topologically, residues Gln29–Lys274 are extracellular. Asn63 is a glycosylation site (N-linked (GlcNAc...) asparagine). Arg119 provides a ligand contact to 4-aminobutanoate. 2 N-linked (GlcNAc...) asparagine glycosylation sites follow: Asn163 and Asn176. A 4-aminobutanoate-binding site is contributed by Thr182. A disulfide bridge links Cys191 with Cys205. A glycan (N-linked (GlcNAc...) asparagine) is linked at Asn228. Residues Ile275–Val295 traverse the membrane as a helical segment. The Cytoplasmic portion of the chain corresponds to Ser296–Pro305. The chain crosses the membrane as a helical span at residues Ala306–Ala325. At Arg326–Thr336 the chain is on the extracellular side. A helical transmembrane segment spans residues Ala337–Ala357. The Cytoplasmic segment spans residues Thr358–Lys457. A Phosphoserine modification is found at Ser426. Residue Thr427 is modified to Phosphothreonine. A Phosphoserine modification is found at Ser433. Residues Ile458–Tyr478 form a helical membrane-spanning segment. Over Val479–Gln492 the chain is Extracellular.

It belongs to the ligand-gated ion channel (TC 1.A.9) family. Gamma-aminobutyric acid receptor (TC 1.A.9.5) subfamily. GABRA3 sub-subfamily. In terms of assembly, heteropentamer, formed by a combination of alpha (GABRA1-6), beta (GABRB1-3), gamma (GABRG1-3), delta (GABRD), epsilon (GABRE), rho (GABRR1-3), pi (GABRP) and theta (GABRQ) chains, each subunit exhibiting distinct physiological and pharmacological properties. Binds UBQLN1. Interacts with GPHN.

It localises to the postsynaptic cell membrane. Its subcellular location is the cell membrane. It catalyses the reaction chloride(in) = chloride(out). Its function is as follows. Alpha subunit of the heteropentameric ligand-gated chloride channel gated by gamma-aminobutyric acid (GABA), a major inhibitory neurotransmitter in the brain. GABA-gated chloride channels, also named GABA(A) receptors (GABAAR), consist of five subunits arranged around a central pore and contain GABA active binding site(s) located at the alpha and beta subunit interface(s). When activated by GABA, GABAARs selectively allow the flow of chloride anions across the cell membrane down their electrochemical gradient. Chloride influx into the postsynaptic neuron following GABAAR opening decreases the neuron ability to generate a new action potential, thereby reducing nerve transmission. The sequence is that of Gamma-aminobutyric acid receptor subunit alpha-3 (GABRA3) from Bos taurus (Bovine).